A 344-amino-acid chain; its full sequence is tRNA N6-adenosine threonylcarbamoyltransferase (344 aa).

Fe cation is bound by residues His-111 and His-115. Residues 134–138, Asp-167, Gly-180, Asp-184, and Asn-277 each bind substrate; that span reads LVSGG. Residue Asp-305 coordinates Fe cation.

It belongs to the KAE1 / TsaD family. It depends on Fe(2+) as a cofactor.

The protein resides in the cytoplasm. It catalyses the reaction L-threonylcarbamoyladenylate + adenosine(37) in tRNA = N(6)-L-threonylcarbamoyladenosine(37) in tRNA + AMP + H(+). Its function is as follows. Required for the formation of a threonylcarbamoyl group on adenosine at position 37 (t(6)A37) in tRNAs that read codons beginning with adenine. Is involved in the transfer of the threonylcarbamoyl moiety of threonylcarbamoyl-AMP (TC-AMP) to the N6 group of A37, together with TsaE and TsaB. TsaD likely plays a direct catalytic role in this reaction. The chain is tRNA N6-adenosine threonylcarbamoyltransferase from Microcystis aeruginosa (strain NIES-843 / IAM M-2473).